The following is a 336-amino-acid chain: Anthranilate phosphoribosyltransferase (336 aa).

Residues Gly82, Gly85 to Asp86, Thr90, Asn92 to Thr95, Lys110 to Gly118, and Ser122 each bind 5-phospho-alpha-D-ribose 1-diphosphate. Gly82 is a binding site for anthranilate. Ser94 contacts Mg(2+). Residue Asn113 coordinates anthranilate. Arg168 is a binding site for anthranilate. Mg(2+)-binding residues include Asp227 and Glu228.

The protein belongs to the anthranilate phosphoribosyltransferase family. As to quaternary structure, homodimer. It depends on Mg(2+) as a cofactor.

The catalysed reaction is N-(5-phospho-beta-D-ribosyl)anthranilate + diphosphate = 5-phospho-alpha-D-ribose 1-diphosphate + anthranilate. Its pathway is amino-acid biosynthesis; L-tryptophan biosynthesis; L-tryptophan from chorismate: step 2/5. Catalyzes the transfer of the phosphoribosyl group of 5-phosphorylribose-1-pyrophosphate (PRPP) to anthranilate to yield N-(5'-phosphoribosyl)-anthranilate (PRA). In Desulfitobacterium hafniense (strain Y51), this protein is Anthranilate phosphoribosyltransferase.